Reading from the N-terminus, the 309-residue chain is MSKVLIFGHKNPDTDTICSAIAYAELKKELGMDAEPVRLGEINGETEYALKKFNAEVPRLVNTVANETDSVILVDHNERQQSVDDLDQVRVLEVIDHHRIANFETSDPLYYRAEPVGCTATILNKLYKENGVEIKKDIAGLMLSAIISDSLLFKSPTCTEEDVKAAKELAAIAGVDADSYGLDMLKAGADLSAKTIPQLLSLDAKEFTMGSHKVEIAQVNTVDTNDVLSRKEEVDAELAKAVSEKGLDLFVFVVTDILTNDSVVVASGQAAQAVEKAFNVTLADNTATLKGVVSRKKQIVPPLTEALKG.

The Mn(2+) site is built by H9, D13, D15, D75, H97, and D149.

It belongs to the PPase class C family. It depends on Mn(2+) as a cofactor.

It is found in the cytoplasm. It carries out the reaction diphosphate + H2O = 2 phosphate + H(+). This is Probable manganese-dependent inorganic pyrophosphatase from Bacillus licheniformis (strain ATCC 14580 / DSM 13 / JCM 2505 / CCUG 7422 / NBRC 12200 / NCIMB 9375 / NCTC 10341 / NRRL NRS-1264 / Gibson 46).